The following is a 552-amino-acid chain: Probable inorganic phosphate transporter 1-10 (552 aa).

At Met-1–Ala-22 the chain is on the cytoplasmic side. Residues Ile-23–Val-43 form a helical membrane-spanning segment. Topologically, residues Met-44–Ser-68 are extracellular. A helical transmembrane segment spans residues Ala-69–Gly-89. The Cytoplasmic segment spans residues Asp-90–Arg-96. Residues Val-97–Cys-117 form a helical membrane-spanning segment. Residues Arg-118–Ala-123 lie on the Extracellular side of the membrane. The helical transmembrane segment at Leu-124–Leu-144 threads the bilayer. At Ser-145–Arg-158 the chain is on the cytoplasmic side. A helical transmembrane segment spans residues Gly-159 to Val-179. At Thr-180–Ala-203 the chain is on the extracellular side. A helical membrane pass occupies residues Asp-204–Trp-224. Residues Arg-225 to Asp-295 lie on the Cytoplasmic side of the membrane. Residues Leu-296–Phe-316 traverse the membrane as a helical segment. The Extracellular segment spans residues Gln-317–Lys-342. A helical transmembrane segment spans residues Phe-343–Ile-363. Over Asp-364 to Arg-369 the chain is Cytoplasmic. A helical transmembrane segment spans residues Cys-370–Tyr-390. Topologically, residues Asp-391–His-397 are extracellular. A helical membrane pass occupies residues Gly-398–Pro-418. The Cytoplasmic portion of the chain corresponds to Asn-419 to His-439. Residues Gly-440–Ala-460 form a helical membrane-spanning segment. Topologically, residues Ser-461–Pro-473 are extracellular. Residues Gly-474–Leu-494 traverse the membrane as a helical segment. The Cytoplasmic portion of the chain corresponds to Thr-495–Val-552. The segment at Leu-507 to Leu-540 is disordered.

Belongs to the major facilitator superfamily. Phosphate:H(+) symporter (TC 2.A.1.9) family. As to expression, expressed at low levels in roots.

The protein localises to the membrane. Functionally, high-affinity transporter for external inorganic phosphate. This Oryza sativa subsp. japonica (Rice) protein is Probable inorganic phosphate transporter 1-10 (PHT1-10).